A 182-amino-acid chain; its full sequence is Keratin, ultra high-sulfur matrix protein (182 aa).

This sequence belongs to the KRTAP type 5 family. In terms of tissue distribution, cuticle layers of differentiating wool follicles.

Functionally, the keratin products of mammalian epidermal derivatives such as wool and hair consist of microfibrils embedded in a rigid matrix of other proteins. The matrix proteins include the high-sulfur and high-tyrosine keratins, having molecular weights of 6-20 kDa, whereas the microfibrils contain the larger, low-sulfur keratins (40-56 kDa). In Ovis aries (Sheep), this protein is Keratin, ultra high-sulfur matrix protein.